We begin with the raw amino-acid sequence, 88 residues long: Small ribosomal subunit protein bS16c (88 aa).

The protein belongs to the bacterial ribosomal protein bS16 family.

The protein resides in the plastid. Its subcellular location is the chloroplast. The chain is Small ribosomal subunit protein bS16c from Citrus sinensis (Sweet orange).